The chain runs to 227 residues: Probable maleylacetoacetate isomerase 2 (227 aa).

Residues 14-97 (IQPILYSYWR…YLEETRPQRP (84 aa)) enclose the GST N-terminal domain. Residues 24 to 29 (SSCSWR), Q55, V69, 81 to 82 (ES), Q121, and 125 to 127 (NLI) contribute to the glutathione site. A GST C-terminal domain is found at 102-222 (DVHKRAKVRE…HPSNQPDCPP (121 aa)).

This sequence belongs to the GST superfamily. Zeta family. Requires glutathione as cofactor.

Its subcellular location is the cytoplasm. It catalyses the reaction 4-maleylacetoacetate = 4-fumarylacetoacetate. The catalysed reaction is RX + glutathione = an S-substituted glutathione + a halide anion + H(+). It participates in amino-acid degradation; L-phenylalanine degradation; acetoacetate and fumarate from L-phenylalanine: step 5/6. Catalyzes the glutathione dependent oxygenation of dichloroacetic acid to glyoxylic acid in vitro. Has no glutathione thioltransferase activity with 4-hydroxynonenal (4-HNE), adrenochrome, phenethyl isothiocyanate (PEITC), 5-hydroperoxyeicosatetraenoic acid ((5S)-HpETE), prostaglandin A2 (PGA2) or 2-hydroxyethyldisulfide (HED). This Drosophila melanogaster (Fruit fly) protein is Probable maleylacetoacetate isomerase 2 (GstZ2).